The sequence spans 203 residues: Putative 3-methyladenine DNA glycosylase (203 aa).

The protein belongs to the DNA glycosylase MPG family.

The chain is Putative 3-methyladenine DNA glycosylase from Clostridium tetani (strain Massachusetts / E88).